We begin with the raw amino-acid sequence, 588 residues long: Solute carrier family 2, facilitated glucose transporter member 12 (588 aa).

The Cytoplasmic portion of the chain corresponds to 1–28 (MLAHSTAQDLILQQRSSDDHPQTNPRQT). A helical membrane pass occupies residues 29–49 (GCGAFIILSSVIAAISGLLVG). The Extracellular portion of the chain corresponds to 50 to 74 (YELGIISGALLQLQSLLELTCQQQE). A helical transmembrane segment spans residues 75–95 (IVVSALLIGALVASLVGGCLI). At 96 to 103 (DLYGRRTT) the chain is on the cytoplasmic side. A helical transmembrane segment spans residues 104–124 (IIFTSILLVFANLLPVVVVSY). Over 125-131 (GSLIAGR) the chain is Extracellular. A helical membrane pass occupies residues 132–152 (IFIGVSISLSAIATCVYIAEL). Residues 153–158 (SPQDKR) are Cytoplasmic-facing. Residues 159–179 (GMLVSLNELMIVAGILLAYIC) traverse the membrane as a helical segment. At 180–191 (NYLFASVNNGWK) the chain is on the extracellular side. The helical transmembrane segment at 192-212 (YMFGLITPLAALQAVAMFFLP) threads the bilayer. The Cytoplasmic portion of the chain corresponds to 213 to 272 (RSPRFLIMKGYDDAAGKVLQKLRATTDINEELTAIKSSIKAEYQYKFLDLFCSRDNMRAR). The helical transmembrane segment at 273–293 (LLIGLTLSFFVQITGQPNILF) threads the bilayer. At 294 to 311 (YASTVLKSVGFQSTEAAS) the chain is on the extracellular side. A helical membrane pass occupies residues 312 to 332 (LASTGIGVVKVVSTIPAIFLV). At 333–339 (DKIGSKT) the chain is on the cytoplasmic side. A helical transmembrane segment spans residues 340–360 (FLCIGSAVMAVSLVSVGLVSL). At 361–459 (QLDVNYNNIC…IPEYMKWLCL (99 aa)) the chain is on the extracellular side. N-linked (GlcNAc...) asparagine glycosylation is found at asparagine 377, asparagine 395, and asparagine 419. The chain crosses the membrane as a helical span at residues 460–480 (SSLLAFVAAFSIGLGPMAWLV). Topologically, residues 481 to 492 (QSEIFPAGIKGR) are cytoplasmic. The helical transmembrane segment at 493–513 (AFAITSSMNWGMNLLISLTFL) threads the bilayer. Topologically, residues 514-522 (TLTEMIGLP) are extracellular. A helical membrane pass occupies residues 523–543 (WMLFGYALMSIASLVFVIMFV). Over 544–588 (PNTKGRPLEEISKELANRSYMCNAVCHRRRSKKKLTPVALIQSPA) the chain is Cytoplasmic.

Belongs to the major facilitator superfamily. Sugar transporter (TC 2.A.1.1) family. Glucose transporter subfamily.

It localises to the cell membrane. Its subcellular location is the endomembrane system. The protein localises to the cytoplasm. It is found in the perinuclear region. It catalyses the reaction D-glucose(out) = D-glucose(in). Functionally, insulin-regulated facilitative glucose transporter. In Xenopus laevis (African clawed frog), this protein is Solute carrier family 2, facilitated glucose transporter member 12.